The primary structure comprises 57 residues: Large ribosomal subunit protein bL33 (57 aa).

Belongs to the bacterial ribosomal protein bL33 family.

The protein is Large ribosomal subunit protein bL33 of Shewanella amazonensis (strain ATCC BAA-1098 / SB2B).